Reading from the N-terminus, the 565-residue chain is Urocanate hydratase (565 aa).

NAD(+)-binding positions include 58-59 (GG), glutamine 136, 182-184 (GMG), glutamate 202, arginine 207, 245-246 (NA), 266-270 (QTSAH), 276-277 (YL), and tyrosine 325. Residue cysteine 413 is part of the active site. Residue glycine 495 coordinates NAD(+).

It belongs to the urocanase family. It depends on NAD(+) as a cofactor.

It localises to the cytoplasm. The catalysed reaction is 4-imidazolone-5-propanoate = trans-urocanate + H2O. The protein operates within amino-acid degradation; L-histidine degradation into L-glutamate; N-formimidoyl-L-glutamate from L-histidine: step 2/3. In terms of biological role, catalyzes the conversion of urocanate to 4-imidazolone-5-propionate. This Vibrio vulnificus (strain CMCP6) protein is Urocanate hydratase.